The sequence spans 316 residues: Leucine-rich repeat-containing protein 73 (316 aa).

LRR repeat units follow at residues 57-78 (SLAQ…KQLA), 86-106 (SIQS…ALLN), 114-137 (ALVA…CGLL), 145-166 (GLKE…SRLA), 174-187 (QVRV…PLGD), 202-223 (TLEV…TLLD), and 231-250 (ALRS…QQQI). Residues 257–296 (GEEEEEMAGGAADTQEWGRGREPAAHQRGGSSWKCPSDPN) form a disordered region. Basic and acidic residues predominate over residues 272–281 (EWGRGREPAA).

This chain is Leucine-rich repeat-containing protein 73 (Lrrc73), found in Rattus norvegicus (Rat).